The chain runs to 227 residues: uncharacterized protein (227 aa).

A signal peptide spans 1 to 21 (MELKKIAVGLTALLGMSVANA).

This is an uncharacterized protein from Haemophilus influenzae (strain ATCC 51907 / DSM 11121 / KW20 / Rd).